Here is a 256-residue protein sequence, read N- to C-terminus: Alcohol dehydrogenase (256 aa).

Phe12–Leu35 lines the NAD(+) pocket. Ser140 lines the substrate pocket. Tyr153 serves as the catalytic Proton acceptor.

The protein belongs to the short-chain dehydrogenases/reductases (SDR) family. In terms of assembly, homodimer.

It catalyses the reaction a primary alcohol + NAD(+) = an aldehyde + NADH + H(+). The enzyme catalyses a secondary alcohol + NAD(+) = a ketone + NADH + H(+). The chain is Alcohol dehydrogenase (Adh) from Drosophila sechellia (Fruit fly).